The following is a 493-amino-acid chain: EGF-containing fibulin-like extracellular matrix protein 1 (493 aa).

The first 17 residues, 1-17, serve as a signal peptide directing secretion; that stretch reads MLKALFLTMLTLALVKS. An EGF-like 1; atypical domain is found at 26–71; sequence YTQCTDGYEWDPVRQQCKDIDECDIVPDACKGGMKCVNHYGGYLCL. The region spanning 173–213 is the EGF-like 2; calcium-binding domain; that stretch reads DIDECTAGTHNCRADQVCINLRGSFACQCPPGYQKRGEQCV. 15 cysteine pairs are disulfide-bonded: C177–C190, C184–C199, C201–C212, C218–C228, C224–C237, C239–C252, C258–C268, C264–C277, C279–C292, C298–C309, C305–C318, C320–C332, C338–C350, C344–C359, and C365–C377. The 40-residue stretch at 214-253 folds into the EGF-like 3; calcium-binding domain; the sequence is DIDECTIPPYCHQRCVNTPGSFYCQCSPGFQLAANNYTCV. The N-linked (GlcNAc...) asparagine glycan is linked to N249. An EGF-like 4; calcium-binding domain is found at 254–293; it reads DINECDASNQCAQQCYNILGSFICQCNQGYELSSDRLNCE. The segment at 259-493 is mediates interaction with TIMP3; sequence DASNQCAQQC…LTIIVGPFSF (235 aa). An EGF-like 5; calcium-binding domain is found at 294-333; the sequence is DIDECRTSSYLCQYQCVNEPGKFSCMCPQGYQVVRSRTCQ. The EGF-like 6; calcium-binding domain maps to 334-378; the sequence is DINECETTNECREDEMCWNYHGGFRCYPRNPCQDPYILTPENRCV.

Belongs to the fibulin family. Interacts with ECM1. Interacts with TIMP3. As to expression, in the eye, associated with photoreceptor outer and inner segment regions, the nerve fiber layer, outer nuclear layer and inner and outer plexiform layers of the retina.

The protein localises to the secreted. Its subcellular location is the extracellular space. It localises to the extracellular matrix. Its function is as follows. Binds EGFR, the EGF receptor, inducing EGFR autophosphorylation and the activation of downstream signaling pathways. May play a role in cell adhesion and migration. May function as a negative regulator of chondrocyte differentiation. In the olfactory epithelium, it may regulate glial cell migration, differentiation and the ability of glial cells to support neuronal neurite outgrowth. The sequence is that of EGF-containing fibulin-like extracellular matrix protein 1 (EFEMP1) from Homo sapiens (Human).